The primary structure comprises 131 residues: DNA-directed RNA polymerase subunit omega (131 aa).

Residues 78-131 are disordered; that stretch reads DEPEAEAVPALSSAPDAAQSDAMGDVQFDRMTEEDLLRGLEGLVPPAATDDDGE. Residues 104–115 are compositionally biased toward basic and acidic residues; it reads QFDRMTEEDLLR.

It belongs to the RNA polymerase subunit omega family. As to quaternary structure, the RNAP catalytic core consists of 2 alpha, 1 beta, 1 beta' and 1 omega subunit. When a sigma factor is associated with the core the holoenzyme is formed, which can initiate transcription.

The catalysed reaction is RNA(n) + a ribonucleoside 5'-triphosphate = RNA(n+1) + diphosphate. Functionally, promotes RNA polymerase assembly. Latches the N- and C-terminal regions of the beta' subunit thereby facilitating its interaction with the beta and alpha subunits. This chain is DNA-directed RNA polymerase subunit omega, found in Beijerinckia indica subsp. indica (strain ATCC 9039 / DSM 1715 / NCIMB 8712).